Consider the following 588-residue polypeptide: Sulfite reductase [NADPH] hemoprotein beta-component (588 aa).

Residues Cys-442, Cys-448, Cys-487, and Cys-491 each coordinate [4Fe-4S] cluster. A siroheme-binding site is contributed by Cys-491.

The protein belongs to the nitrite and sulfite reductase 4Fe-4S domain family. As to quaternary structure, alpha(8)-beta(8). The alpha component is a flavoprotein, the beta component is a hemoprotein. Siroheme serves as cofactor. It depends on [4Fe-4S] cluster as a cofactor.

The enzyme catalyses hydrogen sulfide + 3 NADP(+) + 3 H2O = sulfite + 3 NADPH + 4 H(+). The protein operates within sulfur metabolism; hydrogen sulfide biosynthesis; hydrogen sulfide from sulfite (NADPH route): step 1/1. Functionally, component of the sulfite reductase complex that catalyzes the 6-electron reduction of sulfite to sulfide. This is one of several activities required for the biosynthesis of L-cysteine from sulfate. The polypeptide is Sulfite reductase [NADPH] hemoprotein beta-component (Actinobacillus pleuropneumoniae serotype 5b (strain L20)).